The chain runs to 686 residues: Alpha-amylase 1 (686 aa).

Residue Glu125 is the Nucleophile of the active site. Residue Asp216 is the Proton donor of the active site.

The protein belongs to the glycosyl hydrolase 57 family.

It is found in the cytoplasm. It carries out the reaction Endohydrolysis of (1-&gt;4)-alpha-D-glucosidic linkages in polysaccharides containing three or more (1-&gt;4)-alpha-linked D-glucose units.. In terms of biological role, this amylase is a highly liquefying-type: oligomers appeared at the beginning of incubation, followed by a graded decrease in the amounts of maltotriose, maltose and glucose in prolonged incubation. The sequence is that of Alpha-amylase 1 (amyA) from Dictyoglomus thermophilum (strain ATCC 35947 / DSM 3960 / H-6-12).